Consider the following 978-residue polypeptide: MSSLDRKKPQNRSKNNYYNICLKEKGSEELTCEEHARIIFDGLYEFVGLLDAHGNVLEVNQVALEGAGITLEEIRGKPFWKARWWQISKKTEATQKRLVETASSGEFVRCDVEILGKSGGREVIAVDFSLLPICNEEGSIVYLLAEGRNITDKKKAEAMLALKNQELEQSVERIRKLDNAKSDFFAKVSHELRTPLSLILGPLEAVMAAEAGRESPYWKQFEVIQRNAMTLLKQVNTLLDLAKMDARQMGLSYRRANLSQLTRTISSNFEGIAQQKSITFDTKLPVQMVAEVDCEKYERIILNLLSNAFKFTPDGGLIRCCLSLSRPNYALVTVSDSGPGIPPALRKEIFERFHQLSQEGQQATRGTGLGLSIVKEFVELHRGTISVSDAPGGGALFQVKLPLNAPEGAYVASNTAPRRDNPQVVDTDEYLLLAPNAENEAEVLPFQSDQPRVLIVEDNPDMRGFIKDCLSSDYQVYVAPDGAKALELMSNMPPDLLITDLMMPVMSGDMLVHQVRKKNELSHIPIMVLSAKSDAELRVKLLSESVQDFLLKPFSAHELRARVSNLVSMKVAGDALRKELSDQGDDIAILTHRLIKSRHRLQQSNIALSASEARWKAVYENSAAGIVLTDPENRILNANPAFQRITGYGEKDLEGLSMEQLTPSDESPQIKQRLANLLQGGGAEYSVERSYLCKNGSTIWANASVSLMPQRVGESPVILQIIDDITEKKQAQENLNQLQQQLVYVSRSATMGEFAAYIAHEINQPLSAIMTNANAGTRWLGNEPSNIPEAKEALARIIRDSDRAAEIIRMVRSFLKRQETVLKPIDLKALVTDTSLILKAPSQNNSVNLDVVADDELPEIWGDGVQIQQLIINLAMNAIEAISQADCETRQLTLSFSGNDTGDALVISVKDTGPGISERQMAQLFNAFYTTKKEGLGMGLAICLTITEVHNGKIWVECPPAGGACFLVSIPARQGSGT.

Positions cysteine 32 to serine 103 constitute a PAS 1 domain. The PAC 1 domain occupies valine 108–leucine 162. The 219-residue stretch at lysine 187 to alanine 405 folds into the Histidine kinase 1 domain. Histidine 190 is modified (phosphohistidine; by autocatalysis). The 116-residue stretch at arginine 452–valine 567 folds into the Response regulatory domain. Aspartate 500 carries the 4-aspartylphosphate modification. Positions serine 611 to glycine 681 constitute a PAS 2 domain. The 53-residue stretch at tyrosine 685–glutamine 737 folds into the PAC 2 domain. The region spanning tyrosine 757–glutamine 974 is the Histidine kinase 2 domain. Histidine 760 carries the post-translational modification Phosphohistidine.

Autophosphorylated. Activation requires a sequential transfer of a phosphate group from a His in the primary transmitter domain, to an Asp in the receiver domain and to a His in the secondary transmitter domain.

It localises to the cytoplasm. It carries out the reaction ATP + protein L-histidine = ADP + protein N-phospho-L-histidine.. Activity is regulated by agonists and antagonists. Binding of agonists such as toluene or benzene to TodS stimulates autophosphorylation at His-190. Activity is inhibited by antagonists such as o-xylene, o-chlorotoluene and trimethylbenzene isomers, which bind to TodS but do not stimulate autophosphorylation. Agonists and antagonists bind to the same PAS domain. Member of the two-component regulatory system TodS/TodT involved in the regulation of toluene degradation. Phosphorylates TodT via a four-step phosphorelay in response to toluene. Can also be induced by benzene and ethylbenzene. The protein is Sensor histidine kinase TodS (todS) of Pseudomonas putida (strain DOT-T1E).